The chain runs to 276 residues: DNA repair protein RecO (276 aa).

The protein belongs to the RecO family.

Its function is as follows. Involved in DNA repair and RecF pathway recombination. The polypeptide is DNA repair protein RecO (Mycobacterium sp. (strain JLS)).